Consider the following 102-residue polypeptide: NADH-quinone oxidoreductase subunit K (102 aa).

3 helical membrane-spanning segments follow: residues 5-25 (IAHYLTVSAIMFTVGIFGIFL), 31-51 (IIILMSIELILLSVNLNFVAF), and 66-86 (FILTVAAAEAAIGLAILVVFF).

It belongs to the complex I subunit 4L family. As to quaternary structure, NDH-1 is composed of 14 different subunits. Subunits NuoA, H, J, K, L, M, N constitute the membrane sector of the complex.

The protein localises to the cell inner membrane. It carries out the reaction a quinone + NADH + 5 H(+)(in) = a quinol + NAD(+) + 4 H(+)(out). Its function is as follows. NDH-1 shuttles electrons from NADH, via FMN and iron-sulfur (Fe-S) centers, to quinones in the respiratory chain. The immediate electron acceptor for the enzyme in this species is believed to be ubiquinone. Couples the redox reaction to proton translocation (for every two electrons transferred, four hydrogen ions are translocated across the cytoplasmic membrane), and thus conserves the redox energy in a proton gradient. The protein is NADH-quinone oxidoreductase subunit K of Bartonella bacilliformis (strain ATCC 35685 / KC583 / Herrer 020/F12,63).